A 285-amino-acid polypeptide reads, in one-letter code: Protoheme IX farnesyltransferase (285 aa).

The next 9 membrane-spanning stretches (helical) occupy residues 13-33 (LGKL…AFLA), 40-60 (LLPI…AMII), 89-109 (EAII…FIDN), 110-130 (ILTA…YTIL), 137-157 (LNIV…YTSL), 165-185 (GFLL…SLAL), 194-214 (AHYP…AIAI), 230-252 (INLI…SYRL), and 265-285 (FIFS…VKLI).

Belongs to the UbiA prenyltransferase family. Protoheme IX farnesyltransferase subfamily.

Its subcellular location is the cell membrane. The enzyme catalyses heme b + (2E,6E)-farnesyl diphosphate + H2O = Fe(II)-heme o + diphosphate. It functions in the pathway porphyrin-containing compound metabolism; heme O biosynthesis; heme O from protoheme: step 1/1. Its function is as follows. Converts heme B (protoheme IX) to heme O by substitution of the vinyl group on carbon 2 of heme B porphyrin ring with a hydroxyethyl farnesyl side group. This Saccharolobus islandicus (strain Y.N.15.51 / Yellowstone #2) (Sulfolobus islandicus) protein is Protoheme IX farnesyltransferase.